The primary structure comprises 191 residues: Negative modulator of initiation of replication (191 aa).

An interaction with DNA region spans residues 96-97 (AV).

This sequence belongs to the SeqA family. In terms of assembly, homodimer. Polymerizes to form helical filaments.

It is found in the cytoplasm. In terms of biological role, negative regulator of replication initiation, which contributes to regulation of DNA replication and ensures that replication initiation occurs exactly once per chromosome per cell cycle. Binds to pairs of hemimethylated GATC sequences in the oriC region, thus preventing assembly of replication proteins and re-initiation at newly replicated origins. Repression is relieved when the region becomes fully methylated. The protein is Negative modulator of initiation of replication of Shewanella amazonensis (strain ATCC BAA-1098 / SB2B).